The sequence spans 583 residues: Aspartate--tRNA ligase (583 aa).

Glu-174 lines the L-aspartate pocket. Residues 198 to 201 (QTFK) form an aspartate region. An L-aspartate-binding site is contributed by Arg-220. ATP is bound by residues 220 to 222 (RDE) and Gln-229. His-445 contributes to the L-aspartate binding site. Residue Glu-479 participates in ATP binding. Arg-486 serves as a coordination point for L-aspartate. 531 to 534 (GLDR) contributes to the ATP binding site.

The protein belongs to the class-II aminoacyl-tRNA synthetase family. Type 1 subfamily. In terms of assembly, homodimer.

It is found in the cytoplasm. It carries out the reaction tRNA(Asp) + L-aspartate + ATP = L-aspartyl-tRNA(Asp) + AMP + diphosphate. In terms of biological role, catalyzes the attachment of L-aspartate to tRNA(Asp) in a two-step reaction: L-aspartate is first activated by ATP to form Asp-AMP and then transferred to the acceptor end of tRNA(Asp). The protein is Aspartate--tRNA ligase of Flavobacterium psychrophilum (strain ATCC 49511 / DSM 21280 / CIP 103535 / JIP02/86).